The following is a 1202-amino-acid chain: DNA polymerase beta (1202 aa).

3 tandem repeats follow at residues 1071–1074, 1075–1078, and 1079–1082. Residues 1071 to 1082 are 3 X 4 AA tandem repeats of A-G-[NK]-[PA]; the sequence is AGNPAGNPAGNA.

This sequence belongs to the DNA polymerase type-B family.

It carries out the reaction DNA(n) + a 2'-deoxyribonucleoside 5'-triphosphate = DNA(n+1) + diphosphate. DNA-directed DNA polymerase involved in viral DNA replication. This chain is DNA polymerase beta (DPOL), found in Ornithodoros (relapsing fever ticks).